A 137-amino-acid polypeptide reads, in one-letter code: Allergen Ulo b 1 (137 aa).

The N-terminal stretch at 1–11 (SLFAAAGLAAA) is a signal peptide. Residues 28–137 (QGDYVWKISE…PKDFVCQGVS (110 aa)) enclose the AA1-like domain. 2 cysteine pairs are disulfide-bonded: C67–C82 and C121–C133.

Belongs to the ALTA1 family. In terms of assembly, homodimer; disulfide-linked.

The protein localises to the secreted. The sequence is that of Allergen Ulo b 1 from Alternaria botrytis (Ulocladium botrytis).